Consider the following 273-residue polypeptide: Eukaryotic translation initiation factor 3 subunit G-2 (273 aa).

Positions 193 to 271 constitute an RRM domain; that stretch reads SAVRISNLSE…LILCVEWSKP (79 aa).

Belongs to the eIF-3 subunit G family. Component of the eukaryotic translation initiation factor 3 (eIF-3) complex. The eIF-3 complex interacts with pix.

The protein resides in the cytoplasm. Functionally, RNA-binding component of the eukaryotic translation initiation factor 3 (eIF-3) complex, which is involved in protein synthesis of a specialized repertoire of mRNAs and, together with other initiation factors, stimulates binding of mRNA and methionyl-tRNAi to the 40S ribosome. The eIF-3 complex specifically targets and initiates translation of a subset of mRNAs involved in cell proliferation. This subunit can bind 18S rRNA. The sequence is that of Eukaryotic translation initiation factor 3 subunit G-2 from Drosophila simulans (Fruit fly).